The primary structure comprises 128 residues: Large ribosomal subunit protein bL17 (128 aa).

Belongs to the bacterial ribosomal protein bL17 family. Part of the 50S ribosomal subunit. Contacts protein L32.

The chain is Large ribosomal subunit protein bL17 from Histophilus somni (strain 129Pt) (Haemophilus somnus).